Here is a 75-residue protein sequence, read N- to C-terminus: Caerin 1.11 (75 aa).

The signal sequence occupies residues 1 to 22 (MASLKKSLFLVLFLGFVSVSIC). Residues 23 to 49 (EEEKRQEDEDEHEEEGENQEEGSEEKR) constitute a propeptide that is removed on maturation. The disordered stretch occupies residues 24-48 (EEKRQEDEDEHEEEGENQEEGSEEK). Residues 30 to 45 (DEDEHEEEGENQEEGS) are compositionally biased toward acidic residues. Leu-74 carries the leucine amide modification.

This sequence belongs to the frog skin active peptide (FSAP) family. Caerin subfamily. Expressed by the skin glands.

It localises to the secreted. Its subcellular location is the target cell membrane. In terms of biological role, cationic amphipathic alpha-helical antimicrobial peptide with weak or no activity against both Gram-positive and Gram-negative bacteria. Is weakly active against E.coli (MIC=25 uM), E.cloacae (MIC=50 uM), K.pneumoniae (MIC=25 uM), and S.haemolyticus (MIC=50 uM). Has no activity against S.typhimurium, S.enteritidis, B.megaterium, and S.aureus (MIC&gt;100 uM). The polypeptide is Caerin 1.11 (Ranoidea caerulea (Green tree frog)).